Reading from the N-terminus, the 253-residue chain is MICOS complex subunit mic25 (253 aa).

The disordered stretch occupies residues 1–89 (MGGSESTGRK…GAHKPTAAGV (89 aa)). G2 carries the N-myristoyl glycine lipid modification. Over residues 28–44 (RLSDEVVNRMKDSDLPS) the composition is skewed to basic and acidic residues. The segment covering 48–64 (STSAASGTASAPAAFPS) has biased composition (low complexity). Residues 94 to 178 (AEEDLYRRYE…EQLSSIEKKN (85 aa)) are a coiled coil. The 43-residue stretch at 206–248 (DPVCMNLQADILKCYSENKQERLNCSNLAKEYRKCVSAAQKNL) folds into the CHCH domain. 2 short sequence motifs (cx9C motif) span residues 209-219 (CMNLQADILKC) and 230-240 (CSNLAKEYRKC). Disulfide bonds link C209–C240 and C219–C230.

Belongs to the MICOS complex subunit Mic19 family. Metazoan Mic25 subfamily. As to quaternary structure, component of the mitochondrial contact site and cristae organizing system (MICOS) complex (also known as MINOS or MitOS complex).

It is found in the mitochondrion inner membrane. Functionally, component of the MICOS complex, a large protein complex of the mitochondrial inner membrane that plays crucial roles in the maintenance of crista junctions, inner membrane architecture, and formation of contact sites to the outer membrane. This chain is MICOS complex subunit mic25 (chchd6), found in Xenopus tropicalis (Western clawed frog).